We begin with the raw amino-acid sequence, 1097 residues long: Protein toll (1097 aa).

The N-terminal stretch at 1-27 (MSRLKAASELALLVIILQLLQWPGSEA) is a signal peptide. The Extracellular portion of the chain corresponds to 28 to 807 (SFGRDACSEM…ICPAEKGVFI (780 aa)). Cystine bridges form between Cys-34–Cys-45, Cys-43–Cys-56, and Cys-79–Cys-107. N-linked (GlcNAc...) asparagine glycans are attached at residues Asn-80, Asn-140, and Asn-175. LRR repeat units lie at residues 175–195 (NLSHLELRANIEEMPSHLFDD), 198–219 (NLESIEFGSNKLRQMPRGIFGK), 222–243 (KLKQLNLWSNQLHNLTKHDFEG), 246–267 (SVLGIDIHDNGIEQLPHDVFAH), 270–291 (NVTDINLSANLFRSLPQGLFDH), 294–314 (HLNEVRLMNNRVPLATLPSRL), 320–340 (ELQILRLRAELQSLPGDLFEH), 343–364 (QITNISLGDNLLKTLPATLLEH), 367–388 (NLLSLDLSNNRLTHLPDSLFAH), 391–412 (NLTDLRLEDNLLTGISGDIFSN), 415–436 (NLVTLVMSRNRLRTIDSRAFVS), 439–460 (GLRHLHLDHNDIDLQQPLLDIM), 474–495 (GLLTLNLRNNSIIFVYNDWKNT), 498–521 (QLRELDLSYNNISSLGYEDLAFLS), and 523–544 (NRLHVNMTHNKIRRIALPEDVH). The N-linked (GlcNAc...) asparagine glycan is linked to Asn-235. N-linked (GlcNAc...) asparagine glycosylation is found at Asn-270 and Asn-275. The N-linked (GlcNAc...) asparagine glycan is linked to Asn-346. The N-linked (GlcNAc...) asparagine glycan is linked to Asn-391. Residues Asn-482, Asn-508, and Asn-528 are each glycosylated (N-linked (GlcNAc...) asparagine). Residues 561–620 (NPLVCDCTILWFIQLVRGVHKPQYSRQFKLRTDRLVCSQPNVLEGTPVRQIEPQTLICPL) enclose the LRRCT 1 domain. Intrachain disulfides connect Cys-565–Cys-597, Cys-567–Cys-618, Cys-631–Cys-637, and Cys-635–Cys-650. The LRRNT domain occupies 622 to 663 (FSDDPRERKCPRGCNCHVRTYDKALVINCHSGNLTHVPRLPN). 6 N-linked (GlcNAc...) asparagine glycosylation sites follow: Asn-654, Asn-677, Asn-703, Asn-715, Asn-730, and Asn-738. 3 LRR repeats span residues 669–690 (QLMELHLENNTLLRLPSANTPG), 693–713 (SVTSLHLAGNNLTSIDVDQLP), and 715–738 (NLTHLDISWNHLQMLNATVLGFLN). The LRRCT 2 domain maps to 751 to 801 (NPWMCDCTAKPLLLFTQDNFERIGDRNEMMCVNAEMPTRMVELSTNDICPA). Cystine bridges form between Cys-755/Cys-781 and Cys-757/Cys-799. A helical transmembrane segment spans residues 808 to 828 (ALAVVIALTGLLAGFTAALYY). Over 829 to 1097 (KFQTEIKIWL…INTNAKQSDV (269 aa)) the chain is Cytoplasmic. The TIR domain maps to 857–993 (KKFDAFISYS…WFWDKLRFAL (137 aa)).

Belongs to the Toll-like receptor family. In terms of assembly, in the absence of ligand, forms a low-affinity disulfide-linked homodimer. In the presence of ligand, crystal structures show one Tl molecule bound to a spaetzle C-106 homodimer. However, the active complex probably consists of two Tl molecules bound to a spaetzle C-106 homodimer. This is supported by in vitro experiments which also show binding of the spaetzle C-106 dimer to 2 Tl receptors. Ligand binding induces conformational changes in the extracellular domain of Tl. This may enable a secondary homodimerization interface at the C-terminus of the Tl extracellular domain. In early embryos, concentrated in the pseudocleavage furrows that form transiently between nuclei before cellularization and in the cleavage furrows during cellularization (at protein level). Later, found on cells in the mesectoderm, stomodeum, proctodeum, anterior and posterior midguts, splanchnopleura, salivary gland placode and adjacent to the segmentally repeated tracheal placodes (at protein level). During and after germ band shortening, localized in a number of cell types, including the salivary gland, foregut, hindgut, Malpighian tubules and epidermis (at protein level). In embryos, high expression in M13 with comparatively low expression in M12.

The protein resides in the cell membrane. It is found in the cytoplasm. Its function is as follows. Receptor for the cleaved activated form of spz, spaetzle C-106. Binding to spaetzle C-106 activates the Toll signaling pathway and induces expression of the antifungal peptide drosomycin. Component of the extracellular signaling pathway that establishes dorsal-ventral polarity in the embryo. Promotes heterophilic cellular adhesion. Involved in synaptic targeting of motoneurons RP5 and V to muscle 12 (M12); functions as a repulsive cue inhibiting motoneuron synapse formation on muscle 13 (M13) to guide RP5 and V to the neighboring M12, where its expression is repressed by tey. May also function in embryonic neuronal survival and the synaptic targeting of SNa motoneurons. The sequence is that of Protein toll from Drosophila melanogaster (Fruit fly).